We begin with the raw amino-acid sequence, 233 residues long: Large ribosomal subunit protein uL22m (233 aa).

The protein belongs to the universal ribosomal protein uL22 family. As to quaternary structure, component of the mitochondrial ribosome large subunit (39S) which comprises a 16S rRNA and about 50 distinct proteins.

Its subcellular location is the mitochondrion. In Drosophila pseudoobscura pseudoobscura (Fruit fly), this protein is Large ribosomal subunit protein uL22m (mRpL22).